The primary structure comprises 273 residues: Large ribosomal subunit protein uL2cz/uL2cy (273 aa).

Disordered stretches follow at residues 1–27 (MAKHLYKTPIPSTRKGTVDRQVKSNPR) and 225–273 (PVDH…RRRK).

This sequence belongs to the universal ribosomal protein uL2 family. In terms of assembly, part of the 50S ribosomal subunit.

The protein localises to the plastid. It localises to the chloroplast. The protein is Large ribosomal subunit protein uL2cz/uL2cy (rpl2-A) of Lolium perenne (Perennial ryegrass).